The chain runs to 376 residues: Alcohol dehydrogenase 6 (376 aa).

7 residues coordinate Zn(2+): cysteine 47, histidine 69, cysteine 99, cysteine 102, cysteine 105, cysteine 113, and cysteine 175. NAD(+)-binding positions include 200–205, aspartate 224, arginine 229, 293–295, and arginine 371; these read GLGGVG and VGA.

Belongs to the zinc-containing alcohol dehydrogenase family. Class-V subfamily. Dimer. Zn(2+) is required as a cofactor.

The protein localises to the cytoplasm. It carries out the reaction a primary alcohol + NAD(+) = an aldehyde + NADH + H(+). The enzyme catalyses a secondary alcohol + NAD(+) = a ketone + NADH + H(+). Its function is as follows. Alcohol dehydrogenase. Catalyzes the NAD-dependent oxidation of primary alcohols to the corresponding aldehydes. Oxidizes secondary alcohols to the corresponding ketones. The protein is Alcohol dehydrogenase 6 (Adh6) of Rattus norvegicus (Rat).